Consider the following 223-residue polypeptide: Putative germin-like protein 2-2 (223 aa).

The N-terminal stretch at 1-28 (MAAVGACFLQQLAVVALLALWCSHGAIA) is a signal peptide. Cys38 and Cys53 are joined by a disulfide. The 151-residue stretch at 67–217 (SGLHMAGNTT…AFQVDKNIID (151 aa)) folds into the Cupin type-1 domain. Asn74 and Asn82 each carry an N-linked (GlcNAc...) asparagine glycan. His115, His117, Glu122, and His163 together coordinate Mn(2+). The N-linked (GlcNAc...) asparagine glycan is linked to Asn168.

This sequence belongs to the germin family. In terms of assembly, oligomer (believed to be a pentamer but probably hexamer).

Its subcellular location is the secreted. The protein localises to the extracellular space. It is found in the apoplast. Functionally, may play a role in plant defense. Probably has no oxalate oxidase activity even if the active site is conserved. This chain is Putative germin-like protein 2-2, found in Oryza sativa subsp. japonica (Rice).